The chain runs to 1082 residues: SURP and G-patch domain-containing protein 2 (1082 aa).

Residue threonine 7 is modified to Phosphothreonine. Positions 65–97 (LSGSVAHSRDAGREGLRSDVFPGPSFRSSNPSI) are disordered. Residues 71 to 81 (HSRDAGREGLR) show a composition bias toward basic and acidic residues. 2 positions are modified to phosphoserine: serine 96 and serine 224. Residue lysine 228 forms a Glycyl lysine isopeptide (Lys-Gly) (interchain with G-Cter in SUMO2) linkage. Residue threonine 275 is modified to Phosphothreonine. Position 277 is a phosphoserine (serine 277). Residue lysine 305 forms a Glycyl lysine isopeptide (Lys-Gly) (interchain with G-Cter in SUMO2) linkage. Serine 315, serine 573, and serine 603 each carry phosphoserine. An SURP motif 1 repeat occupies 590-633 (IDQLVKRVIEGSLSPKERTLLKEDPAYWFLSDENSLEYKYYKLK). Residue lysine 650 forms a Glycyl lysine isopeptide (Lys-Gly) (interchain with G-Cter in SUMO2) linkage. Positions 694 to 779 (RRATTGTQTL…QTSSPCPSAD (86 aa)) are disordered. Residues 697–708 (TTGTQTLLSSGT) are compositionally biased toward low complexity. The segment covering 727 to 738 (LPDRNDAAKDCP) has biased composition (basic and acidic residues). Serine 754 and serine 757 each carry phosphoserine. The stretch at 787 to 830 (TAEKLARFVAQVGPEIEQFSIENSTDNPDLWFLHDQNSSAFKFY) is one SURP motif 2 repeat. Disordered regions lie at residues 849 to 930 (NLHT…EAAE), 982 to 1002 (RIAYDRPRGRPMSKKKKPKDL), and 1030 to 1061 (LGSLGKGIREPVSVGTPSEGEGLGADGQEHKE). A Phosphoserine modification is found at serine 863. Composition is skewed to acidic residues over residues 868-877 (MEGEAEFEDE) and 885-904 (LESPEVMPEEEDEDDEDGGE). Positions 990–999 (GRPMSKKKKP) are enriched in basic residues. Residues 995–1000 (KKKKPK) carry the Nuclear localization signal motif. The 47-residue stretch at 1011-1057 (DKNLGFQMLQKMGWKEGHGLGSLGKGIREPVSVGTPSEGEGLGADGQ) folds into the G-patch domain.

Detected in adult testis, and in fetal brain and kidney.

It localises to the nucleus. Its function is as follows. May play a role in mRNA splicing. This is SURP and G-patch domain-containing protein 2 (SUGP2) from Homo sapiens (Human).